A 532-amino-acid polypeptide reads, in one-letter code: Metal-staphylopine-binding protein CntA (532 aa).

The signal sequence occupies residues 1–20; sequence MRKLTKMSAMLLASGLILTG. The N-palmitoyl cysteine moiety is linked to residue cysteine 21. Cysteine 21 is lipidated: S-diacylglycerol cysteine. The staphylopine site is built by arginine 165, arginine 418, and asparagine 448.

It belongs to the bacterial solute-binding protein 5 family. In terms of assembly, the complex is composed of two ATP-binding proteins (CntD and CntF), two transmembrane proteins (CntB and CntC) and a solute-binding protein (CntA).

It localises to the cell membrane. Part of the ABC transporter complex CntABCDF (Opp1) involved in the uptake of metal in complex with the metallophore staphylopine (StP). May be involved in the import of a large array of divalent metals ions such as nickel, cobalt, zinc, copper and iron. Binds the metal via the metallophore StP, and transfers the StP-metal complex to the membrane-bound permease. This is Metal-staphylopine-binding protein CntA from Staphylococcus aureus (strain Mu50 / ATCC 700699).